A 620-amino-acid polypeptide reads, in one-letter code: Chaperone protein HscA homolog (620 aa).

The protein belongs to the heat shock protein 70 family.

Functionally, chaperone involved in the maturation of iron-sulfur cluster-containing proteins. Has a low intrinsic ATPase activity which is markedly stimulated by HscB. The sequence is that of Chaperone protein HscA homolog from Bordetella pertussis (strain Tohama I / ATCC BAA-589 / NCTC 13251).